Reading from the N-terminus, the 727-residue chain is Platelet endothelial cell adhesion molecule (727 aa).

The first 17 residues, 1-17 (MLLALGLTLVLYASLQA), serve as a signal peptide directing secretion. Over 18–590 (EENSFTINSI…VRVFLAPWKK (573 aa)) the chain is Extracellular. 6 Ig-like C2-type domains span residues 40-126 (GQQL…PKVT), 135-213 (GGVV…PIRS), 225-309 (PKFE…IMVN), 315-391 (PKPK…LVPI), 413-472 (GHAI…NCHS), and 488-578 (PVDE…RSST). Cys47 and Cys99 are oxidised to a cystine. N-linked (GlcNAc...) asparagine glycans are attached at residues Asn74 and Asn141. Cystine bridges form between Cys142/Cys195 and Cys245/Cys293. N-linked (GlcNAc...) asparagine glycans are attached at residues Asn309, Asn345, Asn360, Asn424, and Asn540. 3 disulfide bridges follow: Cys336–Cys375, Cys420–Cys465, and Cys512–Cys561. Residues 591–609 (GLIAVVVIGVVIATLIVAA) form a helical membrane-spanning segment. Residues 610 to 727 (KCYFLRKAKA…SRTEGSLNGT (118 aa)) lie on the Cytoplasmic side of the membrane. Cys611 carries the S-palmitoyl cysteine lipid modification. The segment at 642–672 (SEPSVEANSHYGYDDVSGNDAVKPINQNKDP) is disordered. 2 short sequence motifs (ITIM motif) span residues 677–682 (VEYTEV) and 700–705 (TVYSEI). Phosphotyrosine; by FER is present on residues Tyr679 and Tyr702. Positions 698–718 (TETVYSEIRKVDPNLMENRYS) are membrane-bound segment which detaches upon phosphorylation. The interval 710-727 (PNLMENRYSRTEGSLNGT) is may play a role in cytoprotective signaling. A phosphoserine mark is found at Ser718 and Ser723.

As to quaternary structure, trans-homodimer (via Ig-like C2-type 1 and Ig-like C2-type 2 domains); trans-homodimerization is required for cell-cell interaction. Forms a complex with BDKRB2 and GNAQ. Interacts with BDKRB2 and GNAQ. Interacts with PTPN11; Tyr-702 is critical for PTPN11 recruitment. Interacts with FER. Interacts with CD177; the interaction is Ca(2+)-dependent; the interaction is direct. In terms of processing, phosphorylated on Ser and Tyr residues by src kinases after cellular activation. Upon activation, phosphorylated on Ser-718 which probably initiates the dissociation of the membrane-interaction segment (residues 698-718) from the cell membrane allowing the sequential phosphorylation of Tyr-702 and Tyr-679. Constitutively phosphorylated on Ser-723 in resting platelets. Phosphorylated on tyrosine residues by FER and FES in response to FCER1 activation. In endothelial cells Fyn mediates mechanical-force (stretch or pull) induced tyrosine phosphorylation. Post-translationally, palmitoylation by ZDHHC21 is necessary for cell surface expression in endothelial cells and enrichment in membrane rafts. In terms of tissue distribution, expressed in lung and platelets (at protein level).

The protein resides in the cell membrane. Its subcellular location is the membrane raft. The protein localises to the cell junction. Its function is as follows. Cell adhesion molecule which is required for leukocyte transendothelial migration (TEM) under most inflammatory conditions. Tyr-679 plays a critical role in TEM and is required for efficient trafficking of PECAM1 to and from the lateral border recycling compartment (LBRC) and is also essential for the LBRC membrane to be targeted around migrating leukocytes. Trans-homophilic interaction may play a role in endothelial cell-cell adhesion via cell junctions. Heterophilic interaction with CD177 plays a role in transendothelial migration of neutrophils. Homophilic ligation of PECAM1 prevents macrophage-mediated phagocytosis of neighboring viable leukocytes by transmitting a detachment signal. Promotes macrophage-mediated phagocytosis of apoptotic leukocytes by tethering them to the phagocytic cells; PECAM1-mediated detachment signal appears to be disabled in apoptotic leukocytes. Modulates bradykinin receptor BDKRB2 activation. Regulates bradykinin- and hyperosmotic shock-induced ERK1/2 activation in endothelial cells. Induces susceptibility to atherosclerosis. This is Platelet endothelial cell adhesion molecule (Pecam1) from Mus musculus (Mouse).